The primary structure comprises 335 residues: Methionine import ATP-binding protein MetN (335 aa).

The 240-residue stretch at 2 to 241 folds into the ABC transporter domain; that stretch reads IEFQRLHKSY…PKHVTTRRFV (240 aa). An ATP-binding site is contributed by 38–45; that stretch reads GHSGAGKS.

Belongs to the ABC transporter superfamily. Methionine importer (TC 3.A.1.24) family. In terms of assembly, the complex is composed of two ATP-binding proteins (MetN), two transmembrane proteins (MetI) and a solute-binding protein (MetQ).

The protein resides in the cell inner membrane. The enzyme catalyses L-methionine(out) + ATP + H2O = L-methionine(in) + ADP + phosphate + H(+). The catalysed reaction is D-methionine(out) + ATP + H2O = D-methionine(in) + ADP + phosphate + H(+). Functionally, part of the ABC transporter complex MetNIQ involved in methionine import. Responsible for energy coupling to the transport system. The polypeptide is Methionine import ATP-binding protein MetN (Xanthomonas oryzae pv. oryzae (strain KACC10331 / KXO85)).